The following is a 68-amino-acid chain: Medusin-DA1 (68 aa).

The signal sequence occupies residues 1–22 (MAFLKKSLFLVLFLGLVSLSVC). Positions 23 to 48 (EEEKRENEEEKNEQEEDDREERNEEK) are excised as a propeptide. The tract at residues 25 to 47 (EKRENEEEKNEQEEDDREERNEE) is disordered. Over residues 31–41 (EEKNEQEEDDR) the composition is skewed to acidic residues. At Leu-67 the chain carries Leucine amide.

Belongs to the frog skin active peptide (FSAP) family. Medusin subfamily. Expressed by the skin glands.

It is found in the secreted. Its function is as follows. Antimicrobial peptide with activity against Gram-positive bacteria (S.aureus, MIC=32 mg/L) and fungi (C.albicans, MIC=64 mg/L). Shows weak hemolytic activity. This chain is Medusin-DA1, found in Agalychnis dacnicolor (Giant Mexican leaf frog).